A 351-amino-acid polypeptide reads, in one-letter code: Transcription factor Atoh1 (351 aa).

2 disordered regions span residues 16-39 and 89-116; these read LGDH…PATL and EAAA…SKSP. Positions 26–36 are enriched in pro residues; that stretch reads HHVPPLTPQPP. The 53-residue stretch at 156-208 folds into the bHLH domain; it reads QRRLAANARERRRMHGLNHAFDQLRNVIPSFNNDKKLSKYETLQMAQIYINAL. Disordered stretches follow at residues 244 to 278 and 308 to 351; these read GAGA…GPAS and LSPS…DEAS. Residues 247 to 256 are compositionally biased toward low complexity; it reads ASAVAGAQPA. Over residues 258 to 268 the composition is skewed to pro residues; that stretch reads GGGPRPTPPGP. A compositionally biased stretch (basic and acidic residues) spans 332–351; the sequence is HRSDGEFSPHSHYSDSDEAS.

Efficient DNA binding requires dimerization with another bHLH protein. In terms of tissue distribution, developing nervous system, and in adult epithelial cells of the gastrointestinal tract.

The protein resides in the nucleus. Functionally, transcriptional regulator. Activates E box-dependent transcription in collaboration with TCF3/E47, but the activity is completely antagonized by the negative regulator of neurogenesis HES1. Plays a role in the differentiation of subsets of neural cells by activating E box-dependent transcription. The polypeptide is Transcription factor Atoh1 (Mus musculus (Mouse)).